Here is a 400-residue protein sequence, read N- to C-terminus: Subtilisin-like protease 7 (400 aa).

An N-terminal signal peptide occupies residues 1–20; that stretch reads MGFITKAIPLALAAMSVVNG. Positions 21–119 are excised as a propeptide; the sequence is AEILETRAGV…IERDARVQIN (99 aa). Residues 36-118 form the Inhibitor I9 domain; sequence KYIVIMNDGV…YIERDARVQI (83 aa). A Peptidase S8 domain is found at 129–400; sequence SWGLARVGSR…GKLINNGSGK (272 aa). Active-site charge relay system residues include D161 and H192. Residues N222 and N252 are each glycosylated (N-linked (GlcNAc...) asparagine). The active-site Charge relay system is S346. N-linked (GlcNAc...) asparagine glycosylation occurs at N396.

It belongs to the peptidase S8 family.

The protein localises to the secreted. Secreted subtilisin-like serine protease with keratinolytic activity that contributes to pathogenicity. This chain is Subtilisin-like protease 7 (SUB7), found in Arthroderma otae (strain ATCC MYA-4605 / CBS 113480) (Microsporum canis).